A 146-amino-acid polypeptide reads, in one-letter code: Kappa-casein (146 aa).

Residues T97, T107, T112, and T118 are each glycosylated (O-linked (GalNAc...) threonine). T121 carries the phosphothreonine modification. S125 is modified (phosphoserine; alternate). O-linked (GalNAc...) serine; alternate glycosylation is present at S125. O-linked (GalNAc...) threonine glycosylation is present at T142. Residue S143 is modified to Phosphoserine.

Belongs to the kappa-casein family. In terms of tissue distribution, mammary gland specific. Secreted in milk.

Its subcellular location is the secreted. Kappa-casein stabilizes micelle formation, preventing casein precipitation in milk. The protein is Kappa-casein (CSN3) of Panthera uncia (Snow leopard).